Consider the following 247-residue polypeptide: 2,3-bisphosphoglycerate-dependent phosphoglycerate mutase (247 aa).

Residues 8-15 (RHGESQWN), 21-22 (TG), Arg-60, 87-90 (ERHY), Lys-98, 114-115 (RR), and 183-184 (GN) each bind substrate. His-9 functions as the Tele-phosphohistidine intermediate in the catalytic mechanism. Catalysis depends on Glu-87, which acts as the Proton donor/acceptor.

It belongs to the phosphoglycerate mutase family. BPG-dependent PGAM subfamily.

The catalysed reaction is (2R)-2-phosphoglycerate = (2R)-3-phosphoglycerate. The protein operates within carbohydrate degradation; glycolysis; pyruvate from D-glyceraldehyde 3-phosphate: step 3/5. Catalyzes the interconversion of 2-phosphoglycerate and 3-phosphoglycerate. The chain is 2,3-bisphosphoglycerate-dependent phosphoglycerate mutase from Chlorobium chlorochromatii (strain CaD3).